The chain runs to 210 residues: Thymidylate kinase (210 aa).

Position 10–17 (10–17) interacts with ATP; sequence GPEGAGKS.

It belongs to the thymidylate kinase family.

It catalyses the reaction dTMP + ATP = dTDP + ADP. Phosphorylation of dTMP to form dTDP in both de novo and salvage pathways of dTTP synthesis. The chain is Thymidylate kinase from Pseudomonas aeruginosa (strain LESB58).